The following is a 569-amino-acid chain: Cytosolic purine 5'-nucleotidase (569 aa).

Asp52 functions as the Nucleophile in the catalytic mechanism. IMP-binding residues include Asp52 and Asp54. Positions 52 and 54 each coordinate Mg(2+). Asp54 acts as the Proton donor in catalysis. Residues Arg144 and Asn154 each coordinate ATP. Arg202, Asp206, Lys215, Thr249, Asn250, Ser251, and Lys292 together coordinate IMP. Asp351 lines the Mg(2+) pocket. ATP contacts are provided by Gln453 and Arg456. Residues 527 to 569 (SISEIKPPNLFPQAPQEITHCHDEDDDEEEEEEEVEEEEEEEE) form a disordered region. Positions 548–569 (HDEDDDEEEEEEEVEEEEEEEE) are required for tetramer assembly. Positions 550 to 569 (EDDDEEEEEEEVEEEEEEEE) are enriched in acidic residues.

It belongs to the 5'(3')-deoxyribonucleotidase family. As to quaternary structure, homotetramer. Mg(2+) is required as a cofactor.

It localises to the cytoplasm. The protein localises to the cytosol. The enzyme catalyses a ribonucleoside 5'-phosphate + H2O = a ribonucleoside + phosphate. It catalyses the reaction a 2'-deoxyribonucleoside + a ribonucleoside 5'-phosphate = a ribonucleoside + a 2'-deoxyribonucleoside 5'-phosphate. The catalysed reaction is IMP + H2O = inosine + phosphate. It carries out the reaction GMP + H2O = guanosine + phosphate. The enzyme catalyses dGMP + H2O = 2'-deoxyguanosine + phosphate. It catalyses the reaction dIMP + H2O = 2'-deoxyinosine + phosphate. The catalysed reaction is XMP + H2O = xanthosine + phosphate. It carries out the reaction inosine + GMP = guanosine + IMP. The enzyme catalyses dGMP + inosine = 2'-deoxyguanosine + IMP. It catalyses the reaction dIMP + inosine = 2'-deoxyinosine + IMP. The catalysed reaction is inosine + UMP = uridine + IMP. It carries out the reaction inosine + CMP = cytidine + IMP. The enzyme catalyses inosine + AMP = IMP + adenosine. Its activity is regulated as follows. Allosterically activated by various compounds including ATP, 2,3-BPG/2,3-Bisphosphoglyceric acid and Ap4A/P1,P4-bis(5'-adenosyl) tetraphosphate. Binding of an allosteric activator is a prerequisiste to magnesium and substrate binding. Inhibited by inorganic phosphate. Inhibited by inosine, guanosine, p-chloromercuribenzoate and NaF. In terms of biological role, broad specificity cytosolic 5'-nucleotidase that catalyzes the dephosphorylation of 6-hydroxypurine nucleoside 5'-monophosphates. In addition, possesses a phosphotransferase activity by which it can transfer a phosphate from a donor nucleoside monophosphate to an acceptor nucleoside, preferably inosine, deoxyinosine and guanosine. Has the highest activities for IMP and GMP followed by dIMP, dGMP and XMP. Could also catalyze the transfer of phosphates from pyrimidine monophosphates but with lower efficiency. Through these activities regulates the purine nucleoside/nucleotide pools within the cell. The chain is Cytosolic purine 5'-nucleotidase (NT5C2) from Gallus gallus (Chicken).